A 79-amino-acid polypeptide reads, in one-letter code: Small ribosomal subunit protein bS18 (79 aa).

Belongs to the bacterial ribosomal protein bS18 family. Part of the 30S ribosomal subunit. Forms a tight heterodimer with protein bS6.

In terms of biological role, binds as a heterodimer with protein bS6 to the central domain of the 16S rRNA, where it helps stabilize the platform of the 30S subunit. This Streptococcus pneumoniae (strain Hungary19A-6) protein is Small ribosomal subunit protein bS18.